The following is a 1407-amino-acid chain: MKDLLKFLKAQTKTEEFDAIKIALASPDMIRSWSFGEVKKPETINYRTFKPERDGLFCARIFGPVKDYECLCGKYKRLKHRGVICEKCGVEVTQTKVRRERMGHIELASPTAHIWFLKSLPSRIGLLLDMPLRDIERVLYFESYVVIEGGMTNLERQQILTEEQYLDALEEFGDEFDAKMGAEAIQALLKSMDLEQECETLREELNETNSETKRKKLTKRIKLLEAFVQSGNKPEWMILTVLPVLPPDLRPLVPLDGGRFATSDLNDLYRRVINRNNRLKRLLDLAAPDIIVRNEKRMLQEAVDALLDNGRRGRAITGSNKRPLKSLADMIKGKQGRFRQNLLGKRVDYSGRSVITVGPYLRLHQCGLPKKMALELFKPFIYGKLELRGLATTIKAAKKMVEREEAVVWDILDEVIREHPVLLNRAPTLHRLGIQAFEPVLIEGKAIQLHPLVCAAYNADFDGDQMAVHVPLTLEAQLEARALMMSTNNILSPANGEPIIVPSQDVVLGLYYMTRDCVNAKGEGMVLTGPKEAERIYRAGLASLHARVKVRITEYEKDENGEFVAHTSLKDTTVGRAILWMIVPKGLPFSIVNQALGKKAISKMLNTCYRILGLKPTVIFADQTMYTGFAYAARSGASVGIDDMVIPEKKHEIISEAEAEVAEIQEQFQSGLVTAGERYNKVIDIWAAANDRVSKAMMDNLQTETVINRDGQEEQQVSFNSIYMMADSGARGSAAQIRQLAGMRGLMAKPDGSIIETPITANFREGLNVLQYFISTHGARKGLADTALKTANSGYLTRRLVDVAQDLVVTEDDCGTHEGILMTPVIEGGDVKEPLRDRVLGRVTAEDVLNPGTADILVPRNTLLHEQWCDLLEANSVDAVKVRSVVSCDTDFGVCAHCYGRDLARGHIINKGEAIGVIAAQSIGEPGTQLTMRTFHIGGAASRAAAESSIQVKNKGSIKLSNVKSVVNSSGKLVITSRNTELKLIDEFGRTKESYKVPYGAVMAKGDGEQVAGGETVANWDPHTMPVITEVSGFIRFTDMIDGQTITRQTDELTGLSSLVVLDSAERTTGGKDLRPALKIVDAQGNDVLIPGTDMPAQYFLPGKAIVQLEDGVQISSGDTLARIPQESGGTKDITGGLPRVADLFEARRPKEPAILAEIAGIVSFGKETKGKRRLVITPVDGSDPYEEMIPKWRQLNVFEGERVERGDVISDGPEAPHDILRLRGVHAVTRYIVNEVQDVYRLQGVKINDKHIEVIVRQMLRKATIESAGSSDFLEGEQVEYSRVKIANRELEANGKVGATFSRDLLGITKASLATESFISAASFQETTRVLTEAAVAGKRDELRGLKENVIVGRLIPAGTGYAYHQDRMRRRAAGEQLATPQVTAEDASASLAELLNAGLGGSDNE.

The Zn(2+) site is built by C70, C72, C85, and C88. D460, D462, and D464 together coordinate Mg(2+). C814, C888, C895, and C898 together coordinate Zn(2+).

This sequence belongs to the RNA polymerase beta' chain family. The RNAP catalytic core consists of 2 alpha, 1 beta, 1 beta' and 1 omega subunit. When a sigma factor is associated with the core the holoenzyme is formed, which can initiate transcription. Mg(2+) is required as a cofactor. It depends on Zn(2+) as a cofactor.

The catalysed reaction is RNA(n) + a ribonucleoside 5'-triphosphate = RNA(n+1) + diphosphate. In terms of biological role, DNA-dependent RNA polymerase catalyzes the transcription of DNA into RNA using the four ribonucleoside triphosphates as substrates. The protein is DNA-directed RNA polymerase subunit beta' of Salmonella paratyphi A (strain ATCC 9150 / SARB42).